We begin with the raw amino-acid sequence, 116 residues long: Large ribosomal subunit protein bL19 (116 aa).

This sequence belongs to the bacterial ribosomal protein bL19 family.

In terms of biological role, this protein is located at the 30S-50S ribosomal subunit interface and may play a role in the structure and function of the aminoacyl-tRNA binding site. The polypeptide is Large ribosomal subunit protein bL19 (Mannheimia succiniciproducens (strain KCTC 0769BP / MBEL55E)).